We begin with the raw amino-acid sequence, 286 residues long: MQFIKYKSYILKFLLVSCIFCINGCDCTILCPNGLIAQEQRFVLFVSFFTMLLIIIPVIFMTIFFVLRYRESNFSKTYDPKWSHSNIIELLIWGIPIIIIVFLSIFSWKSVHDLDPKKPIVSNVQPIKINVISLDWKWLFIYPDQKIATINKLIIPINTPIIFNLTSGSVMNSFFIPSLGSQIYVMPGMKTNLNLIANKLGQFKGFSSNYSGKGFSNMKFDVLVTSDHIFFYEWVKKIQKSKYKLNSMYQFNQLAIPSDNNAIKYFSNLKENLFNVVIANVLKISL.

The signal sequence occupies residues 1–24; it reads MQFIKYKSYILKFLLVSCIFCING. The N-palmitoyl cysteine moiety is linked to residue C25. Residue C25 is the site of S-diacylglycerol cysteine attachment. At 25–44 the chain is on the extracellular side; sequence CDCTILCPNGLIAQEQRFVL. Residues 45 to 67 form a helical membrane-spanning segment; that stretch reads FVSFFTMLLIIIPVIFMTIFFVL. Residues 68 to 85 lie on the Cytoplasmic side of the membrane; it reads RYRESNFSKTYDPKWSHS. The chain crosses the membrane as a helical span at residues 86 to 108; sequence NIIELLIWGIPIIIIVFLSIFSW. Residues 109–286 lie on the Extracellular side of the membrane; it reads KSVHDLDPKK…VIANVLKISL (178 aa).

This sequence belongs to the cytochrome c oxidase subunit 2 family. In terms of assembly, heterooctamer of two A chains, two B chains, two C chains and two D chains.

The protein localises to the cell membrane. In terms of biological role, cytochrome bo(3) ubiquinol terminal oxidase is the component of the aerobic respiratory chain of E.coli that predominates when cells are grown at high aeration. Has proton pump activity across the membrane in addition to electron transfer, pumping 2 protons/electron. In Buchnera aphidicola subsp. Baizongia pistaciae (strain Bp), this protein is Cytochrome bo(3) ubiquinol oxidase subunit 2 (cyoA).